The following is a 425-amino-acid chain: High-affinity branched-chain amino acid transport system permease protein LivM (425 aa).

Helical transmembrane passes span 6–26 (IAMA…FMGV), 45–65 (WQWV…RPAF), 92–112 (FLVA…RGTV), 120–140 (IYII…LLVL), 145–165 (FYAI…LGFW), 167–187 (CLPI…FPVL), 191–211 (GDYL…LLLN), 260–280 (RVIF…FVIN), 311–331 (IKLT…TLFA), 353–373 (IVVL…ILLV), and 387–407 (MLML…GLLP).

It belongs to the binding-protein-dependent transport system permease family. LivHM subfamily.

It is found in the cell inner membrane. In terms of biological role, part of the binding-protein-dependent transport system for branched-chain amino acids. Probably responsible for the translocation of the substrates across the membrane. The protein is High-affinity branched-chain amino acid transport system permease protein LivM (livM) of Escherichia coli (strain K12).